A 367-amino-acid chain; its full sequence is 4-hydroxy-3-methylbut-2-en-1-yl diphosphate synthase (flavodoxin) (367 aa).

The [4Fe-4S] cluster site is built by C268, C271, C303, and E310.

This sequence belongs to the IspG family. The cofactor is [4Fe-4S] cluster.

It carries out the reaction (2E)-4-hydroxy-3-methylbut-2-enyl diphosphate + oxidized [flavodoxin] + H2O + 2 H(+) = 2-C-methyl-D-erythritol 2,4-cyclic diphosphate + reduced [flavodoxin]. It participates in isoprenoid biosynthesis; isopentenyl diphosphate biosynthesis via DXP pathway; isopentenyl diphosphate from 1-deoxy-D-xylulose 5-phosphate: step 5/6. Converts 2C-methyl-D-erythritol 2,4-cyclodiphosphate (ME-2,4cPP) into 1-hydroxy-2-methyl-2-(E)-butenyl 4-diphosphate. This chain is 4-hydroxy-3-methylbut-2-en-1-yl diphosphate synthase (flavodoxin), found in Halalkalibacterium halodurans (strain ATCC BAA-125 / DSM 18197 / FERM 7344 / JCM 9153 / C-125) (Bacillus halodurans).